A 147-amino-acid polypeptide reads, in one-letter code: MTATSDKVLKIQLRSASATVPTKGSATAAGYDIYASQDITIPAMGQGMVSTDISFTVPVGTYGRIAPRSGLAVKNGIQTGAGVVDRDYTGEVKVVLFNHSQRDFAIKKGDRVAQLILEKIVDDAQIVVVDSLEESARGAGGFGSTGN.

DUMP contacts are provided by Ser69, Gly82, Asp85, Tyr88, Lys93, Arg137, Phe142, and Gly143.

This sequence belongs to the dUTPase family. As to quaternary structure, homotrimer. It depends on Mg(2+) as a cofactor.

It catalyses the reaction dUTP + H2O = dUMP + diphosphate + H(+). It functions in the pathway pyrimidine metabolism; dUMP biosynthesis; dUMP from dCTP (dUTP route): step 2/2. In terms of biological role, involved in nucleotide metabolism via production of dUMP, the immediate precursor of thymidine nucleotides, and decreases the intracellular concentration of dUTP so that uracil cannot be incorporated into DNA. Shows a significant activity against dITP, another potentially mutagenic nucleotide. This Saccharomyces cerevisiae (strain ATCC 204508 / S288c) (Baker's yeast) protein is Deoxyuridine 5'-triphosphate nucleotidohydrolase.